A 182-amino-acid chain; its full sequence is Protein Syd (182 aa).

This sequence belongs to the Syd family.

Its subcellular location is the cell inner membrane. In terms of biological role, interacts with the SecY protein in vivo. May bind preferentially to an uncomplexed state of SecY, thus functioning either as a chelating agent for excess SecY in the cell or as a regulatory factor that negatively controls the translocase function. In Aeromonas hydrophila subsp. hydrophila (strain ATCC 7966 / DSM 30187 / BCRC 13018 / CCUG 14551 / JCM 1027 / KCTC 2358 / NCIMB 9240 / NCTC 8049), this protein is Protein Syd.